Consider the following 141-residue polypeptide: Large ribosomal subunit protein bL17 (141 aa).

This sequence belongs to the bacterial ribosomal protein bL17 family. As to quaternary structure, part of the 50S ribosomal subunit. Contacts protein L32.

The chain is Large ribosomal subunit protein bL17 from Gluconacetobacter diazotrophicus (strain ATCC 49037 / DSM 5601 / CCUG 37298 / CIP 103539 / LMG 7603 / PAl5).